We begin with the raw amino-acid sequence, 131 residues long: Small ribosomal subunit protein bS6 (131 aa).

A disordered region spans residues 98–131 (EASPMVKAKDERRERRDDFANETADDADAGDSEE). Basic and acidic residues predominate over residues 104–116 (KAKDERRERRDDF). The segment covering 120–131 (TADDADAGDSEE) has biased composition (acidic residues).

Belongs to the bacterial ribosomal protein bS6 family.

Binds together with bS18 to 16S ribosomal RNA. The protein is Small ribosomal subunit protein bS6 of Citrobacter koseri (strain ATCC BAA-895 / CDC 4225-83 / SGSC4696).